The following is a 382-amino-acid chain: Prolargin (382 aa).

The first 20 residues, 1–20 (MRSPLCWLLPLLILASVAQG), serve as a signal peptide directing secretion. Residues 19–66 (QGQPTRRPRPGTGPGRRPRPRPRPTPSFPQPDEPAEPTDLPPPLPPGP) are disordered. 2 stretches are compositionally biased toward pro residues: residues 41–50 (RPTPSFPQPD) and 57–66 (DLPPPLPPGP). LRR repeat units lie at residues 95 to 114 (RKVP…NNFI), 115 to 138 (TELP…NNRI), 139 to 162 (RKID…KNQL), 163 to 183 (EEVP…QNHI), 184 to 207 (SRIP…HNRL), 208 to 233 (SDGV…HNIL), 234 to 254 (RKMP…SNKI), 255 to 278 (ETIP…YNKL), 279 to 303 (TDRG…HNRI), 304 to 323 (SSVP…NNSI), 324 to 362 (EKIN…GNYL), and 363 to 382 (KPPI…SVVI). The N-linked (GlcNAc...) asparagine glycan is linked to asparagine 124. N-linked (GlcNAc...) asparagine glycans are attached at residues asparagine 289, asparagine 320, and asparagine 327. A disulfide bond links cysteine 332 and cysteine 373.

This sequence belongs to the small leucine-rich proteoglycan (SLRP) family. SLRP class II subfamily. In terms of assembly, binds the basement membrane heparan sulfate proteoglycan perlecan and triple helical collagens type I and type II. Glycosylated; contains heparan sulfate. Connective tissue.

It is found in the secreted. It localises to the extracellular space. The protein localises to the extracellular matrix. May anchor basement membranes to the underlying connective tissue. The protein is Prolargin (PRELP) of Homo sapiens (Human).